Here is a 398-residue protein sequence, read N- to C-terminus: 1-deoxy-D-xylulose 5-phosphate reductoisomerase (398 aa).

Residues Thr-10, Gly-11, Ser-12, Ile-13, Lys-37, Asn-38, and Asn-124 each contribute to the NADPH site. Lys-125 lines the 1-deoxy-D-xylulose 5-phosphate pocket. Glu-126 lines the NADPH pocket. Asp-150 contacts Mn(2+). The 1-deoxy-D-xylulose 5-phosphate site is built by Ser-151, Glu-152, Ser-186, and His-209. Glu-152 contacts Mn(2+). Gly-215 is a binding site for NADPH. 1-deoxy-D-xylulose 5-phosphate-binding residues include Ser-222, Asn-227, Lys-228, and Glu-231. Glu-231 provides a ligand contact to Mn(2+).

The protein belongs to the DXR family. Homodimer. Mg(2+) is required as a cofactor. It depends on Mn(2+) as a cofactor.

The catalysed reaction is 2-C-methyl-D-erythritol 4-phosphate + NADP(+) = 1-deoxy-D-xylulose 5-phosphate + NADPH + H(+). The protein operates within isoprenoid biosynthesis; isopentenyl diphosphate biosynthesis via DXP pathway; isopentenyl diphosphate from 1-deoxy-D-xylulose 5-phosphate: step 1/6. Its function is as follows. Catalyzes the NADPH-dependent rearrangement and reduction of 1-deoxy-D-xylulose-5-phosphate (DXP) to 2-C-methyl-D-erythritol 4-phosphate (MEP). In Buchnera aphidicola subsp. Acyrthosiphon pisum (strain APS) (Acyrthosiphon pisum symbiotic bacterium), this protein is 1-deoxy-D-xylulose 5-phosphate reductoisomerase.